The following is a 233-amino-acid chain: MRKCYVKEFHKLISYSEGIEIQQKAFDFVIRNNIDGILLLLQHKPVITIGKSGGKNNILASKYELDKYSIDLCHTSRGGNVTYHGPGQLVGYPILNLNNFQKDIHLYLRQLELILINTVREYGIKAGIKPKYTGVWVGDRKIAAIGVGIRKWITRHGFAINISVNKEHFKLIVPCGIKEFGVCSLEDFTANVDYNDVVQKIENNFKMIFETDLIKEETVDNLFERSNLNLRIT.

Positions 32 to 213 constitute a BPL/LPL catalytic domain; the sequence is NNIDGILLLL…NFKMIFETDL (182 aa). Substrate is bound by residues 77-84, 144-146, and 157-159; these read RGGNVTYH, AIG, and GFA. The active-site Acyl-thioester intermediate is the cysteine 175.

Belongs to the LipB family.

It is found in the cytoplasm. It catalyses the reaction octanoyl-[ACP] + L-lysyl-[protein] = N(6)-octanoyl-L-lysyl-[protein] + holo-[ACP] + H(+). It participates in protein modification; protein lipoylation via endogenous pathway; protein N(6)-(lipoyl)lysine from octanoyl-[acyl-carrier-protein]: step 1/2. Catalyzes the transfer of endogenously produced octanoic acid from octanoyl-acyl-carrier-protein onto the lipoyl domains of lipoate-dependent enzymes. Lipoyl-ACP can also act as a substrate although octanoyl-ACP is likely to be the physiological substrate. This chain is Octanoyltransferase, found in Clostridium kluyveri (strain ATCC 8527 / DSM 555 / NBRC 12016 / NCIMB 10680 / K1).